A 423-amino-acid chain; its full sequence is UDP-N-acetylglucosamine 1-carboxyvinyltransferase (423 aa).

Position 22-23 (22-23 (KN)) interacts with phosphoenolpyruvate. Arg98 contacts UDP-N-acetyl-alpha-D-glucosamine. The active-site Proton donor is the Cys122. Position 122 is a 2-(S-cysteinyl)pyruvic acid O-phosphothioketal (Cys122). UDP-N-acetyl-alpha-D-glucosamine-binding positions include 127–131 (RPVDQ), Asp311, and Ile333.

It belongs to the EPSP synthase family. MurA subfamily.

Its subcellular location is the cytoplasm. It carries out the reaction phosphoenolpyruvate + UDP-N-acetyl-alpha-D-glucosamine = UDP-N-acetyl-3-O-(1-carboxyvinyl)-alpha-D-glucosamine + phosphate. It participates in cell wall biogenesis; peptidoglycan biosynthesis. In terms of biological role, cell wall formation. Adds enolpyruvyl to UDP-N-acetylglucosamine. This chain is UDP-N-acetylglucosamine 1-carboxyvinyltransferase, found in Stenotrophomonas maltophilia (strain K279a).